The sequence spans 109 residues: Mitochondrial pyruvate carrier 1 (109 aa).

N-acetylalanine is present on A2. The Mitochondrial matrix portion of the chain corresponds to 2 to 20; that stretch reads AGALVRKAADYVRSKDFRD. The helical transmembrane segment at 21–41 threads the bilayer; that stretch reads YLMSTHFWGPVANWGLPIAAI. The Mitochondrial intermembrane portion of the chain corresponds to 42-52; sequence NDMKKSPEIIS. Residues 53–71 form a helical membrane-spanning segment; it reads GRMTFALCCYSLTFMRFAY. The residue at position 72 (K72) is an N6-acetyllysine. Topologically, residues 72–109 are mitochondrial matrix; it reads KVQPRNWLLFACHVTNEVAQLIQGGRLINYEMSKRPSA.

The protein belongs to the mitochondrial pyruvate carrier (MPC) (TC 2.A.105) family. In terms of assembly, homodimer. Forms heterodimer with MPC2. The heterodimer is the more stable and dominant form.

It localises to the mitochondrion inner membrane. The catalysed reaction is pyruvate(out) + H(+)(out) = pyruvate(in) + H(+)(in). In terms of biological role, mediates the uptake of pyruvate into mitochondria. This chain is Mitochondrial pyruvate carrier 1 (Mpc1), found in Mus musculus (Mouse).